The chain runs to 35 residues: Jingzhaotoxin F6-27.63 (35 aa).

3 disulfide bridges follow: C2–C17, C9–C22, and C16–C29.

Belongs to the neurotoxin 10 (Hwtx-1) family. 49 (Jztx-F6) subfamily. In terms of tissue distribution, expressed by the venom gland.

Its subcellular location is the secreted. Functionally, probable ion channel inhibitor. This chain is Jingzhaotoxin F6-27.63, found in Chilobrachys guangxiensis (Chinese earth tiger tarantula).